A 445-amino-acid polypeptide reads, in one-letter code: 6-phosphogluconate dehydrogenase, decarboxylating (445 aa).

NADP(+)-binding positions include 1-4 (AVMG), 22-24 (NRS), 63-65 (VKA), and Asn91. Residues Asn91 and 117–119 (SGG) contribute to the substrate site. Lys172 serves as the catalytic Proton acceptor. Substrate is bound at residue 175–176 (HN). The active-site Proton donor is the Glu179. Positions 180, 249, 276, 434, and 440 each coordinate substrate.

It belongs to the 6-phosphogluconate dehydrogenase family. As to quaternary structure, homodimer.

The enzyme catalyses 6-phospho-D-gluconate + NADP(+) = D-ribulose 5-phosphate + CO2 + NADPH. The protein operates within carbohydrate degradation; pentose phosphate pathway; D-ribulose 5-phosphate from D-glucose 6-phosphate (oxidative stage): step 3/3. Catalyzes the oxidative decarboxylation of 6-phosphogluconate to ribulose 5-phosphate and CO(2), with concomitant reduction of NADP to NADPH. The sequence is that of 6-phosphogluconate dehydrogenase, decarboxylating (gnd) from Shigella sonnei.